Reading from the N-terminus, the 346-residue chain is STE20-related kinase adapter protein stlk (346 aa).

The 289-residue stretch at 10–298 folds into the Protein kinase domain; that stretch reads YKLLEILKNG…ASKLMTHSFL (289 aa). ATP-binding positions include 16–24 and Lys-38; that span reads LKNGMIGTV.

This sequence belongs to the protein kinase superfamily. STE Ser/Thr protein kinase family. STE20 subfamily.

This chain is STE20-related kinase adapter protein stlk, found in Drosophila melanogaster (Fruit fly).